Here is a 406-residue protein sequence, read N- to C-terminus: Tyrosine--tRNA ligase (406 aa).

L-tyrosine is bound at residue tyrosine 39. The 'HIGH' region signature appears at proline 44 to histidine 53. Residues tyrosine 172 and glutamine 176 each coordinate L-tyrosine. Residues lysine 232–threonine 236 carry the 'KMSKS' region motif. Lysine 235 contributes to the ATP binding site. The S4 RNA-binding domain occupies lysine 344–valine 404.

It belongs to the class-I aminoacyl-tRNA synthetase family. TyrS type 1 subfamily. Homodimer.

Its subcellular location is the cytoplasm. It carries out the reaction tRNA(Tyr) + L-tyrosine + ATP = L-tyrosyl-tRNA(Tyr) + AMP + diphosphate + H(+). In terms of biological role, catalyzes the attachment of tyrosine to tRNA(Tyr) in a two-step reaction: tyrosine is first activated by ATP to form Tyr-AMP and then transferred to the acceptor end of tRNA(Tyr). This Fusobacterium nucleatum subsp. nucleatum (strain ATCC 25586 / DSM 15643 / BCRC 10681 / CIP 101130 / JCM 8532 / KCTC 2640 / LMG 13131 / VPI 4355) protein is Tyrosine--tRNA ligase.